The sequence spans 130 residues: Putative pre-16S rRNA nuclease (130 aa).

Belongs to the YqgF nuclease family.

The protein resides in the cytoplasm. Functionally, could be a nuclease involved in processing of the 5'-end of pre-16S rRNA. In Buchnera aphidicola subsp. Cinara cedri (strain Cc), this protein is Putative pre-16S rRNA nuclease.